The chain runs to 184 residues: dCTP deaminase (184 aa).

Residues 107–112, 131–133, Q152, Y166, and Q176 each bind dCTP; these read KSTYAR and TLE. The Proton donor/acceptor role is filled by E133.

Belongs to the dCTP deaminase family. As to quaternary structure, homotrimer.

The catalysed reaction is dCTP + H2O + H(+) = dUTP + NH4(+). The protein operates within pyrimidine metabolism; dUMP biosynthesis; dUMP from dCTP (dUTP route): step 1/2. Catalyzes the deamination of dCTP to dUTP. This is dCTP deaminase from Erythrobacter litoralis (strain HTCC2594).